Reading from the N-terminus, the 508-residue chain is Photosystem II CP47 reaction center protein (508 aa).

A run of 6 helical transmembrane segments spans residues 21-36, 101-115, 140-156, 203-218, 237-252, and 457-472; these read SVHIMHTALVAGWAGS, IVLSGLCFLAAIWHW, GIHLFLSGVACFGFGAF, IAAGTLGILAGLFHLS, VLSSSIAAVFFAAFVV, and SFALLFFFGHIWHGAR.

This sequence belongs to the PsbB/PsbC family. PsbB subfamily. PSII is composed of 1 copy each of membrane proteins PsbA, PsbB, PsbC, PsbD, PsbE, PsbF, PsbH, PsbI, PsbJ, PsbK, PsbL, PsbM, PsbT, PsbX, PsbY, PsbZ, Psb30/Ycf12, at least 3 peripheral proteins of the oxygen-evolving complex and a large number of cofactors. It forms dimeric complexes. Binds multiple chlorophylls. PSII binds additional chlorophylls, carotenoids and specific lipids. is required as a cofactor.

The protein localises to the plastid. It localises to the chloroplast thylakoid membrane. Functionally, one of the components of the core complex of photosystem II (PSII). It binds chlorophyll and helps catalyze the primary light-induced photochemical processes of PSII. PSII is a light-driven water:plastoquinone oxidoreductase, using light energy to abstract electrons from H(2)O, generating O(2) and a proton gradient subsequently used for ATP formation. This Pelargonium hortorum (Common geranium) protein is Photosystem II CP47 reaction center protein.